Here is a 452-residue protein sequence, read N- to C-terminus: Bifunctional protein GlmU (452 aa).

The tract at residues 1–231 (MSRTCLAVIL…EAELAGCNNR (231 aa)) is pyrophosphorylase. UDP-N-acetyl-alpha-D-glucosamine is bound by residues 10–13 (LAAG), lysine 24, glutamine 77, 82–83 (GT), 105–107 (YGD), glycine 143, glutamate 157, asparagine 172, and asparagine 229. Aspartate 107 provides a ligand contact to Mg(2+). Asparagine 229 is a Mg(2+) binding site. The segment at 232-252 (AELAVIEKLWQERRRHELMLS) is linker. Residues 253 to 452 (GVSMIAPETV…MAIKAFSGKV (200 aa)) are N-acetyltransferase. UDP-N-acetyl-alpha-D-glucosamine-binding residues include arginine 318 and lysine 336. Histidine 348 (proton acceptor) is an active-site residue. Residues tyrosine 351 and asparagine 362 each contribute to the UDP-N-acetyl-alpha-D-glucosamine site. Residues alanine 365, 371–372 (NY), serine 390, serine 408, and arginine 425 each bind acetyl-CoA.

In the N-terminal section; belongs to the N-acetylglucosamine-1-phosphate uridyltransferase family. It in the C-terminal section; belongs to the transferase hexapeptide repeat family. In terms of assembly, homotrimer. Mg(2+) is required as a cofactor.

It is found in the cytoplasm. The catalysed reaction is alpha-D-glucosamine 1-phosphate + acetyl-CoA = N-acetyl-alpha-D-glucosamine 1-phosphate + CoA + H(+). The enzyme catalyses N-acetyl-alpha-D-glucosamine 1-phosphate + UTP + H(+) = UDP-N-acetyl-alpha-D-glucosamine + diphosphate. The protein operates within nucleotide-sugar biosynthesis; UDP-N-acetyl-alpha-D-glucosamine biosynthesis; N-acetyl-alpha-D-glucosamine 1-phosphate from alpha-D-glucosamine 6-phosphate (route II): step 2/2. It participates in nucleotide-sugar biosynthesis; UDP-N-acetyl-alpha-D-glucosamine biosynthesis; UDP-N-acetyl-alpha-D-glucosamine from N-acetyl-alpha-D-glucosamine 1-phosphate: step 1/1. It functions in the pathway bacterial outer membrane biogenesis; LPS lipid A biosynthesis. In terms of biological role, catalyzes the last two sequential reactions in the de novo biosynthetic pathway for UDP-N-acetylglucosamine (UDP-GlcNAc). The C-terminal domain catalyzes the transfer of acetyl group from acetyl coenzyme A to glucosamine-1-phosphate (GlcN-1-P) to produce N-acetylglucosamine-1-phosphate (GlcNAc-1-P), which is converted into UDP-GlcNAc by the transfer of uridine 5-monophosphate (from uridine 5-triphosphate), a reaction catalyzed by the N-terminal domain. The chain is Bifunctional protein GlmU from Allorhizobium ampelinum (strain ATCC BAA-846 / DSM 112012 / S4) (Agrobacterium vitis (strain S4)).